The chain runs to 364 residues: Long-wave-sensitive opsin 1 (364 aa).

The Extracellular segment spans residues 1-58; that stretch reads MTQRWGPQRLAGGQPQAGLEESTQASIFTYTNSNATRDPFEGPNYHIAPRWVYHLTSA. Serine 22 carries an O-linked (GlcNAc) serine glycan. Asparagine 34 carries an N-linked (GlcNAc...) asparagine glycan. The helical transmembrane segment at 59-79 threads the bilayer; sequence WMIFVVIASVFTNGLVLVATM. The Cytoplasmic segment spans residues 80-90; it reads RFKKLRHPLNW. A helical membrane pass occupies residues 91-111; sequence ILVNLAIADLAETIIASTISV. At 112–126 the chain is on the extracellular side; it reads VNQIYGYFVLGHPLC. The cysteines at positions 126 and 203 are disulfide-linked. A helical transmembrane segment spans residues 127–147; that stretch reads VVEGYTVSLCGITGLWSLAII. At 148 to 168 the chain is on the cytoplasmic side; that stretch reads SWERWLVVCKPFGNVRFDAKL. The chain crosses the membrane as a helical span at residues 169–189; the sequence is AIAGIAFSWIWAAVWTAPPIF. Over 190 to 219 the chain is Extracellular; sequence GWSRYWPHGLKTSCGPDVFSGSSYPGVQSY. The chain crosses the membrane as a helical span at residues 220–240; sequence MIVLMTTCCIIPLSVIILCYL. Residues 241 to 269 are Cytoplasmic-facing; that stretch reads QVWLAIRAVAKQQKESESTQKAEKEVTRM. Residues 270–290 traverse the membrane as a helical segment; the sequence is VVVMVLAYCLCWGPYTFFACF. Topologically, residues 291–301 are extracellular; the sequence is AAAHPGYAFHP. The chain crosses the membrane as a helical span at residues 302 to 324; sequence LVAALPAYFAKSATIYNPIIYVF. Position 312 is an N6-(retinylidene)lysine (lysine 312). The Cytoplasmic segment spans residues 325-364; sequence MNRQFRNCILQLFGKKVDDSSELSSASRTEASSVSSVSPA.

This sequence belongs to the G-protein coupled receptor 1 family. Opsin subfamily. In terms of processing, phosphorylated on some or all of the serine and threonine residues present in the C-terminal region. In terms of tissue distribution, the three color pigments are found in the cone photoreceptor cells.

Its subcellular location is the membrane. In terms of biological role, visual pigments are the light-absorbing molecules that mediate vision. They consist of an apoprotein, opsin, covalently linked to cis-retinal. This Canis lupus familiaris (Dog) protein is Long-wave-sensitive opsin 1 (OPN1LW).